We begin with the raw amino-acid sequence, 493 residues long: Probable malate:quinone oxidoreductase (493 aa).

Belongs to the MQO family. It depends on FAD as a cofactor.

The enzyme catalyses (S)-malate + a quinone = a quinol + oxaloacetate. It functions in the pathway carbohydrate metabolism; tricarboxylic acid cycle; oxaloacetate from (S)-malate (quinone route): step 1/1. This chain is Probable malate:quinone oxidoreductase, found in Mycobacterium marinum (strain ATCC BAA-535 / M).